The primary structure comprises 444 residues: Shufflon protein B' (444 aa).

The tract at residues 1–361 is constant region; sequence MKKYDRGWAS…TGAILSCQSG (361 aa). The interval 362–444 is variable region; it reads TWRKVGSGEL…GSITVYAICQ (83 aa).

The protein is Shufflon protein B' of Escherichia coli.